A 247-amino-acid chain; its full sequence is ATP synthase subunit a, chloroplastic (247 aa).

Transmembrane regions (helical) follow at residues 38-58 (QVLITSWVVIAILLGSAAIAV), 95-115 (VPFIGTMFLFIFVSNWSGALL), 134-154 (INTTVALALPTSVAYFYAGLT), 199-219 (LVVVVLVSLVPSVVPIPVMFL), and 220-240 (GLFTSSIQALIFATLAAAYIG).

It belongs to the ATPase A chain family. In terms of assembly, F-type ATPases have 2 components, CF(1) - the catalytic core - and CF(0) - the membrane proton channel. CF(1) has five subunits: alpha(3), beta(3), gamma(1), delta(1), epsilon(1). CF(0) has four main subunits: a, b, b' and c.

It is found in the plastid. The protein resides in the chloroplast thylakoid membrane. Key component of the proton channel; it plays a direct role in the translocation of protons across the membrane. This chain is ATP synthase subunit a, chloroplastic, found in Illicium oligandrum (Star anise).